A 402-amino-acid polypeptide reads, in one-letter code: MAAGGGLSRSERKAAERVRRLREEQQRERLRQVSRILRKAAAERSAEEGRLLAESEDLVTELQGRSRRREGLKRRQEEVCDDPEELRRKVRELAGAVRSARHLVVYTGAGISTAASIPDYRGPNGVWTLLQKGRPVSAADLSEAEPTLTHMSITRLHEQKLVQHVVSQNCDGLHLRSGLPRTAISELHGNMYIEVCTSCIPNREYVRVFDVTERTALHRHLTGRTCHKCGTQLRDTIVHFGERGTLGQPLNWEAATEAASKADTILCLGSSLKVLKKYPRLWCMTKPPSRRPKLYIVNLQWTPKDDWAALKLHGKCDDVMQLLMNELGLEIPVYNRWQDPIFSLATPLRAGEEGSHSRKSLCRSREEAPPGDQSDPLASAPPILGGWFGRGCAKRAKRKKVA.

Residues 1-23 (MAAGGGLSRSERKAAERVRRLRE) are disordered. The span at 9-23 (RSERKAAERVRRLRE) shows a compositional bias: basic and acidic residues. The region spanning 83-330 (PEELRRKVRE…QLLMNELGLE (248 aa)) is the Deacetylase sirtuin-type domain. NAD(+) is bound by residues 108 to 127 (GAGI…NGVW) and 168 to 171 (QNCD). The active-site Proton acceptor is the H188. C196, C199, C226, and C229 together coordinate Zn(2+). NAD(+) is bound by residues 269 to 271 (GSS), 298 to 300 (NLQ), and C316. Residues 355–402 (SHSRKSLCRSREEAPPGDQSDPLASAPPILGGWFGRGCAKRAKRKKVA) form a disordered region. Asymmetric dimethylarginine; alternate is present on R390. R390 is subject to Omega-N-methylarginine; alternate. A compositionally biased stretch (basic residues) spans 392 to 402 (CAKRAKRKKVA).

The protein belongs to the sirtuin family. Class IV subfamily. In terms of assembly, interacts with UBTF and the RNA polymerase I complex. Interacts with components of the B-WICH complex, such as MYBBP1A, SMARCA5/SNF2H and BAZ1B/WSTF. Interacts with ELK4, leading to stabilization at target promoters for H3K18Ac deacetylation. Interacts with histone H2A and/or histone H2B. Interacts with DNMT1. Interacts with SIRT1. Zn(2+) is required as a cofactor. In terms of processing, phosphorylated during mitosis. Post-translationally, methylation at Arg-390 by PRMT6 inhibits the H3K18Ac histone deacetylase activity, promoting mitochondria biogenesis and maintaining mitochondria respiration. Ubiquitinated via 'Lys-63'-linked ubiquitin chains. Deubiquitinated by USP7, inhibiting the H3K18Ac histone deacetylase activity and regulating gluconeogenesis. Ubiquitinated by E3 ubiquitin-protein ligase complex containing FBXO7; leading to proteasomal degradation. In terms of tissue distribution, detected in liver, spleen and testis. Detected in embryos.

The protein resides in the nucleus. It localises to the nucleolus. Its subcellular location is the nucleoplasm. It is found in the chromosome. The protein localises to the cytoplasm. The catalysed reaction is N(6)-acetyl-L-lysyl-[protein] + NAD(+) + H2O = 2''-O-acetyl-ADP-D-ribose + nicotinamide + L-lysyl-[protein]. The enzyme catalyses N(6)-glutaryl-L-lysyl-[protein] + NAD(+) + H2O = 2''-O-glutaryl-ADP-D-ribose + nicotinamide + L-lysyl-[protein]. It catalyses the reaction N(6)-succinyl-L-lysyl-[protein] + NAD(+) + H2O = 2''-O-succinyl-ADP-D-ribose + nicotinamide + L-lysyl-[protein]. It carries out the reaction N(6)-propanoyl-L-lysyl-[protein] + NAD(+) + H2O = 3''-O-propanoyl-ADP-D-ribose + nicotinamide + L-lysyl-[protein]. The catalysed reaction is N(6)-decanoyl-L-lysyl-[protein] + NAD(+) + H2O = 2''-O-decanoyl-ADP-D-ribose + nicotinamide + L-lysyl-[protein]. With respect to regulation, NAD-dependent protein-lysine deacetylase and deacylase activities are activated by nucleic acids. Histone deacetylase activity is activated by DNA. Protein-lysine deacylase activity is activated by RNA. H3K18Ac histone deacetylase activity is inhibited by methylation at Arg-390. H3K18Ac histone deacetylase activity is inhibited by deubiquitination by USP7. In terms of biological role, NAD-dependent protein-lysine deacylase that can act both as a deacetylase or deacylase (desuccinylase, depropionylase and deglutarylase), depending on the context. Also acts as a dedecanoylase. Specifically mediates deacetylation of histone H3 at 'Lys-18' (H3K18Ac). In contrast to other histone deacetylases, displays strong preference for a specific histone mark, H3K18Ac, directly linked to control of gene expression. H3K18Ac is mainly present around the transcription start site of genes and has been linked to activation of nuclear hormone receptors; SIRT7 thereby acts as a transcription repressor. Moreover, H3K18 hypoacetylation has been reported as a marker of malignancy in various cancers and seems to maintain the transformed phenotype of cancer cells. Also able to mediate deacetylation of histone H3 at 'Lys-36' (H3K36Ac) in the context of nucleosomes. Also mediates deacetylation of non-histone proteins, such as ATM, CDK9, DDX21, DDB1, FBL, FKBP5/FKBP51, GABPB1, RAN, RRP9/U3-55K and POLR1E/PAF53. Enriched in nucleolus where it stimulates transcription activity of the RNA polymerase I complex. Acts by mediating the deacetylation of the RNA polymerase I subunit POLR1E/PAF53, thereby promoting the association of RNA polymerase I with the rDNA promoter region and coding region. In response to metabolic stress, SIRT7 is released from nucleoli leading to hyperacetylation of POLR1E/PAF53 and decreased RNA polymerase I transcription. Required to restore the transcription of ribosomal RNA (rRNA) at the exit from mitosis. Promotes pre-ribosomal RNA (pre-rRNA) cleavage at the 5'-terminal processing site by mediating deacetylation of RRP9/U3-55K, a core subunit of the U3 snoRNP complex. Mediates 'Lys-37' deacetylation of Ran, thereby regulating the nuclear export of NF-kappa-B subunit RELA/p65. Acts as a regulator of DNA damage repair by mediating deacetylation of ATM during the late stages of DNA damage response, promoting ATM dephosphorylation and deactivation. May also deacetylate p53/TP53 and promotes cell survival, however such data need additional confirmation. Suppresses the activity of the DCX (DDB1-CUL4-X-box) E3 ubiquitin-protein ligase complexes by mediating deacetylation of DDB1, which prevents the interaction between DDB1 and CUL4 (CUL4A or CUL4B). Activates RNA polymerase II transcription by mediating deacetylation of CDK9, thereby promoting 'Ser-2' phosphorylation of the C-terminal domain (CTD) of RNA polymerase II. Deacetylates FBL, promoting histone-glutamine methyltransferase activity of FBL. Acts as a regulator of mitochondrial function by catalyzing deacetylation of GABPB1. Regulates Akt/AKT1 activity by mediating deacetylation of FKBP5/FKBP51. Required to prevent R-loop-associated DNA damage and transcription-associated genomic instability by mediating deacetylation and subsequent activation of DDX21, thereby overcoming R-loop-mediated stalling of RNA polymerases. In addition to protein deacetylase activity, also acts as protein-lysine deacylase. Acts as a protein depropionylase by mediating depropionylation of Osterix (SP7), thereby regulating bone formation by osteoblasts. Acts as a histone deglutarylase by mediating deglutarylation of histone H4 on 'Lys-91' (H4K91glu); a mark that destabilizes nucleosomes by promoting dissociation of the H2A-H2B dimers from nucleosomes. Acts as a histone desuccinylase: in response to DNA damage, recruited to DNA double-strand breaks (DSBs) and catalyzes desuccinylation of histone H3 on 'Lys-122' (H3K122succ), thereby promoting chromatin condensation and DSB repair. Also promotes DSB repair by promoting H3K18Ac deacetylation, regulating non-homologous end joining (NHEJ). Along with its role in DNA repair, required for chromosome synapsis during prophase I of female meiosis by catalyzing H3K18Ac deacetylation. Involved in transcriptional repression of LINE-1 retrotransposon via H3K18Ac deacetylation, and promotes their association with the nuclear lamina. Required to stabilize ribosomal DNA (rDNA) heterochromatin and prevent cellular senescence induced by rDNA instability. Acts as a negative regulator of SIRT1 by preventing autodeacetylation of SIRT1, restricting SIRT1 deacetylase activity. This chain is NAD-dependent protein deacetylase sirtuin-7, found in Mus musculus (Mouse).